Here is a 1038-residue protein sequence, read N- to C-terminus: Translation initiation factor IF-2 (1038 aa).

Residues 32–442 (GSALASLSDE…RKGVNTAAPR (411 aa)) are disordered. 3 stretches are compositionally biased toward low complexity: residues 65-77 (PPTK…PVAP), 100-113 (PAEA…PAQP), and 131-147 (PKLA…APAA). Basic and acidic residues-rich tracts occupy residues 204–217 (SGGR…KRES) and 275–295 (RSLD…DAGK). Over residues 311–328 (PSAPAKPAAPTGSSGPAA) the composition is skewed to low complexity. A compositionally biased stretch (basic and acidic residues) spans 331–344 (PDIKLTRDVIEGHK). Residues 422-435 (HHYRRSRPRIRRKG) show a composition bias toward basic residues. The region spanning 529-696 (ARPPVVTFLG…TLLTIAELNE (168 aa)) is the tr-type G domain. The G1 stretch occupies residues 538–545 (GHVDHGKT). Residue 538 to 545 (GHVDHGKT) participates in GTP binding. The G2 stretch occupies residues 563 to 567 (GITQH). The segment at 584-587 (DTPG) is G3. Residues 584–588 (DTPGH) and 638–641 (NKID) contribute to the GTP site. Residues 638 to 641 (NKID) are G4. Residues 674-676 (SAT) form a G5 region.

Belongs to the TRAFAC class translation factor GTPase superfamily. Classic translation factor GTPase family. IF-2 subfamily.

It localises to the cytoplasm. Functionally, one of the essential components for the initiation of protein synthesis. Protects formylmethionyl-tRNA from spontaneous hydrolysis and promotes its binding to the 30S ribosomal subunits. Also involved in the hydrolysis of GTP during the formation of the 70S ribosomal complex. This chain is Translation initiation factor IF-2, found in Rhodopirellula baltica (strain DSM 10527 / NCIMB 13988 / SH1).